The following is a 102-amino-acid chain: Beta-defensin 116 (102 aa).

An N-terminal signal peptide occupies residues 1–23 (MSVMKPCLMTIAILMILAQKTPG). Intrachain disulfides connect Cys40/Cys67, Cys47/Cys61, and Cys51/Cys68. Residues 83 to 102 (EDYDSNSNLSVTNSSSYSHI) form a disordered region. Residues 87-102 (SNSNLSVTNSSSYSHI) show a composition bias toward low complexity.

It belongs to the beta-defensin family.

The protein localises to the secreted. Has antibacterial activity. The sequence is that of Beta-defensin 116 (DEFB116) from Homo sapiens (Human).